A 240-amino-acid polypeptide reads, in one-letter code: Uridylate kinase (240 aa).

13–16 lines the ATP pocket; the sequence is KASG. Positions 21–26 are involved in allosteric activation by GTP; the sequence is GSQGFG. Residue Gly55 coordinates UMP. Residues Gly56 and Arg60 each contribute to the ATP site. Residues Asp75 and 136–143 each bind UMP; that span reads TGNPFFTT. Thr163, Gln164, Tyr169, and Asp172 together coordinate ATP.

It belongs to the UMP kinase family. As to quaternary structure, homohexamer.

It localises to the cytoplasm. The enzyme catalyses UMP + ATP = UDP + ADP. The protein operates within pyrimidine metabolism; CTP biosynthesis via de novo pathway; UDP from UMP (UMPK route): step 1/1. Its activity is regulated as follows. Allosterically activated by GTP. Inhibited by UTP. Its function is as follows. Catalyzes the reversible phosphorylation of UMP to UDP. This chain is Uridylate kinase, found in Brucella abortus biovar 1 (strain 9-941).